The sequence spans 185 residues: RING-H2 finger protein ATL8 (185 aa).

A helical transmembrane segment spans residues 28–48 (LVLILAVLLCALTCIIGLIAV). An RING-type; atypical zinc finger spans residues 104–146 (CAICLTEFAAGDELRVLPQCGHGFHVSCIDTWLGSHSSCPSCR). Residues 161–185 (PGSSSSGPEPDTRIKQREDGPDNLP) are disordered. Basic and acidic residues predominate over residues 170–185 (PDTRIKQREDGPDNLP).

It belongs to the RING-type zinc finger family. ATL subfamily.

The protein resides in the membrane. It carries out the reaction S-ubiquitinyl-[E2 ubiquitin-conjugating enzyme]-L-cysteine + [acceptor protein]-L-lysine = [E2 ubiquitin-conjugating enzyme]-L-cysteine + N(6)-ubiquitinyl-[acceptor protein]-L-lysine.. The protein operates within protein modification; protein ubiquitination. The polypeptide is RING-H2 finger protein ATL8 (ATL8) (Arabidopsis thaliana (Mouse-ear cress)).